A 156-amino-acid chain; its full sequence is Lipoprotein signal peptidase (156 aa).

3 helical membrane passes run 5 to 25, 64 to 84, and 89 to 109; these read FKFI…DQWV, YLHL…KTLL, and IAFG…FIHG. Catalysis depends on residues D113 and D130. The helical transmembrane segment at 122–142 threads the bilayer; it reads NFAIFNVADVMINISVALILI.

The protein belongs to the peptidase A8 family.

It is found in the cell inner membrane. It catalyses the reaction Release of signal peptides from bacterial membrane prolipoproteins. Hydrolyzes -Xaa-Yaa-Zaa-|-(S,diacylglyceryl)Cys-, in which Xaa is hydrophobic (preferably Leu), and Yaa (Ala or Ser) and Zaa (Gly or Ala) have small, neutral side chains.. It functions in the pathway protein modification; lipoprotein biosynthesis (signal peptide cleavage). In terms of biological role, this protein specifically catalyzes the removal of signal peptides from prolipoproteins. This chain is Lipoprotein signal peptidase, found in Campylobacter jejuni subsp. jejuni serotype O:23/36 (strain 81-176).